The chain runs to 128 residues: Large ribosomal subunit protein bL20 (128 aa).

Belongs to the bacterial ribosomal protein bL20 family.

Its function is as follows. Binds directly to 23S ribosomal RNA and is necessary for the in vitro assembly process of the 50S ribosomal subunit. It is not involved in the protein synthesizing functions of that subunit. The protein is Large ribosomal subunit protein bL20 of Anaplasma phagocytophilum (strain HZ).